A 157-amino-acid polypeptide reads, in one-letter code: Large ribosomal subunit protein uL11 (157 aa).

Belongs to the universal ribosomal protein uL11 family.

Functionally, this protein binds directly to 26S ribosomal RNA. The sequence is that of Large ribosomal subunit protein uL11 (RPL12) from Chlamydomonas reinhardtii (Chlamydomonas smithii).